The following is a 335-amino-acid chain: Beta-hexosaminidase (335 aa).

Residues Asp60, Arg68, Arg133, and 163–164 (KH) each bind substrate. The active-site Proton donor/acceptor is the His176. The active-site Nucleophile is the Asp247.

The protein belongs to the glycosyl hydrolase 3 family. NagZ subfamily. Monomer.

It is found in the cytoplasm. The catalysed reaction is Hydrolysis of terminal non-reducing N-acetyl-D-hexosamine residues in N-acetyl-beta-D-hexosaminides.. The protein operates within cell wall biogenesis; peptidoglycan recycling. In terms of biological role, plays a role in peptidoglycan recycling by cleaving the terminal beta-1,4-linked N-acetylglucosamine (GlcNAc) from peptide-linked peptidoglycan fragments, giving rise to free GlcNAc, anhydro-N-acetylmuramic acid and anhydro-N-acetylmuramic acid-linked peptides. The polypeptide is Beta-hexosaminidase (Xylella fastidiosa (strain 9a5c)).